The following is a 507-amino-acid chain: Probable cytosol aminopeptidase (507 aa).

2 residues coordinate Mn(2+): Lys271 and Asp276. The active site involves Lys283. Residues Asp294, Asp353, and Glu355 each contribute to the Mn(2+) site. Residue Arg357 is part of the active site.

It belongs to the peptidase M17 family. Requires Mn(2+) as cofactor.

The protein localises to the cytoplasm. The enzyme catalyses Release of an N-terminal amino acid, Xaa-|-Yaa-, in which Xaa is preferably Leu, but may be other amino acids including Pro although not Arg or Lys, and Yaa may be Pro. Amino acid amides and methyl esters are also readily hydrolyzed, but rates on arylamides are exceedingly low.. It carries out the reaction Release of an N-terminal amino acid, preferentially leucine, but not glutamic or aspartic acids.. Presumably involved in the processing and regular turnover of intracellular proteins. Catalyzes the removal of unsubstituted N-terminal amino acids from various peptides. The polypeptide is Probable cytosol aminopeptidase (Nitratidesulfovibrio vulgaris (strain ATCC 29579 / DSM 644 / CCUG 34227 / NCIMB 8303 / VKM B-1760 / Hildenborough) (Desulfovibrio vulgaris)).